An 863-amino-acid chain; its full sequence is Glycerol-3-phosphate acyltransferase (863 aa).

The segment at 1-29 (MPKKNSPLLPKETTTTQSSVDTSGSSNLT) is disordered. Over residues 12–29 (ETTTTQSSVDTSGSSNLT) the composition is skewed to polar residues. The HXXXXD motif motif lies at 343 to 348 (SHRSHM).

It belongs to the GPAT/DAPAT family.

Its subcellular location is the cell inner membrane. The catalysed reaction is sn-glycerol 3-phosphate + an acyl-CoA = a 1-acyl-sn-glycero-3-phosphate + CoA. Its pathway is phospholipid metabolism; CDP-diacylglycerol biosynthesis; CDP-diacylglycerol from sn-glycerol 3-phosphate: step 1/3. The chain is Glycerol-3-phosphate acyltransferase from Xylella fastidiosa (strain M23).